The primary structure comprises 327 residues: Tetraspanin-4 (327 aa).

At 1–6 (MRSRSN) the chain is on the cytoplasmic side. A helical transmembrane segment spans residues 7–27 (LIGLINFFTFLLSIPILGGGI). Residues 28-43 (WLSSRANSTDCLRFLQ) are Extracellular-facing. N-linked (GlcNAc...) asparagine glycosylation occurs at Asn-34. Residues 44–64 (WPLIIIGISIMVISLAGIAGA) form a helical membrane-spanning segment. At 65 to 75 (CYQNKFLMWLY) the chain is on the cytoplasmic side. The chain crosses the membrane as a helical span at residues 76–96 (LFTMFFVIAALIGFTIFAYVV). The Extracellular portion of the chain corresponds to 97–235 (TDKGSGRFVM…LGSLKKSWRK (139 aa)). Asn-187 carries N-linked (GlcNAc...) asparagine glycosylation. A helical transmembrane segment spans residues 236–256 (VSVINIVVVIILVIFYVIACA). The Cytoplasmic segment spans residues 257-287 (AYQNVKRMYNDEPVGEARMTNLILVIFKFKE). A helical transmembrane segment spans residues 288–308 (ILVQFFFGIVFLLLFNGLMVC). Topologically, residues 309–327 (CCNDKFAFSVFFFGYVTYA) are extracellular.

Belongs to the tetraspanin (TM4SF) family.

The protein resides in the membrane. Functionally, may be involved in the regulation of cell differentiation. In Arabidopsis thaliana (Mouse-ear cress), this protein is Tetraspanin-4 (TET4).